Consider the following 397-residue polypeptide: MSLALYTCLFWLCTSGLWTTQAVTDEDSSSHRDLAPTNVDFAFNLYKRLVALNSDKNTLISPVSISMALAMLSLSTRGSTQYLENLGFNMSKMSEAEIHQGFQYLNSLLQQSDTGLEMNMGNVMFLLQNLKLKDSFLADTKHYYESEALTIPSKDWTKAGEQINNHVKNKTQGKIEHVVSDLDSSATLILINYIFLKGIWKLPFSPENTREEDFYVNETSTVKVPMMVQSGNISYFRDSAIPCQMVQMNYVGNGTTFIILPDQGQMDTVVAALNRDTIDRWGKLMIPRQMNLYIPKFSMSDTYDLQDVLADVGIKDLFTNQSDFADTTKDTPLTLTVLHKAMLQLDEGNVLPAATNGPPVHLPSESFTLKYNRPFIFLAFDKYTWSSLMMSQVMNPA.

The N-terminal stretch at 1 to 22 (MSLALYTCLFWLCTSGLWTTQA) is a signal peptide. N-linked (GlcNAc...) asparagine glycans are attached at residues Asn89, Asn169, Asn217, and Asn232. Gln247 lines the cortisol pocket. Asn253 carries an N-linked (GlcNAc...) asparagine glycan. Cortisol is bound at residue Asp279. N-linked (GlcNAc...) asparagine glycosylation is present at Asn320. Position 385 (Trp385) interacts with cortisol.

Belongs to the serpin family. In terms of tissue distribution, expressed by the liver; secreted in plasma.

The protein resides in the secreted. Its function is as follows. Major transport protein for glucocorticoids and progestins in the blood of almost all vertebrate species. This chain is Corticosteroid-binding globulin (Serpina6), found in Mus musculus (Mouse).